Here is a 176-residue protein sequence, read N- to C-terminus: NAD(P)H-quinone oxidoreductase subunit 6, chloroplastic (176 aa).

The next 5 helical transmembrane spans lie at 10-30 (ILLVFLGSGLILGGLGVVLLT), 32-52 (PISSAFSLGLVLVCISLFYIP), 61-81 (AQLLIYVGAINVLIVFAVMFM), 92-112 (LWTIGDGFTSLVCTSILFSLI), and 152-172 (FYLPFELISIILLVALIGAIA).

Belongs to the complex I subunit 6 family. NDH is composed of at least 16 different subunits, 5 of which are encoded in the nucleus.

It localises to the plastid. Its subcellular location is the chloroplast thylakoid membrane. The enzyme catalyses a plastoquinone + NADH + (n+1) H(+)(in) = a plastoquinol + NAD(+) + n H(+)(out). It carries out the reaction a plastoquinone + NADPH + (n+1) H(+)(in) = a plastoquinol + NADP(+) + n H(+)(out). Its function is as follows. NDH shuttles electrons from NAD(P)H:plastoquinone, via FMN and iron-sulfur (Fe-S) centers, to quinones in the photosynthetic chain and possibly in a chloroplast respiratory chain. The immediate electron acceptor for the enzyme in this species is believed to be plastoquinone. Couples the redox reaction to proton translocation, and thus conserves the redox energy in a proton gradient. This chain is NAD(P)H-quinone oxidoreductase subunit 6, chloroplastic (ndhG), found in Chloranthus spicatus (Chulantree).